We begin with the raw amino-acid sequence, 212 residues long: Pyridoxine/pyridoxamine 5'-phosphate oxidase (212 aa).

Substrate is bound by residues 7 to 10 (RAKY) and K65. Residues 60 to 65 (RTVLLK), 75 to 76 (FT), K82, and Q104 contribute to the FMN site. Substrate is bound by residues Y122, R126, and S130. Residues 139 to 140 (QS) and W184 contribute to the FMN site. Position 190 to 192 (190 to 192 (RLH)) interacts with substrate. FMN is bound at residue R194.

Belongs to the pyridoxamine 5'-phosphate oxidase family. In terms of assembly, homodimer. It depends on FMN as a cofactor.

The enzyme catalyses pyridoxamine 5'-phosphate + O2 + H2O = pyridoxal 5'-phosphate + H2O2 + NH4(+). The catalysed reaction is pyridoxine 5'-phosphate + O2 = pyridoxal 5'-phosphate + H2O2. The protein operates within cofactor metabolism; pyridoxal 5'-phosphate salvage; pyridoxal 5'-phosphate from pyridoxamine 5'-phosphate: step 1/1. Its pathway is cofactor metabolism; pyridoxal 5'-phosphate salvage; pyridoxal 5'-phosphate from pyridoxine 5'-phosphate: step 1/1. Catalyzes the oxidation of either pyridoxine 5'-phosphate (PNP) or pyridoxamine 5'-phosphate (PMP) into pyridoxal 5'-phosphate (PLP). This chain is Pyridoxine/pyridoxamine 5'-phosphate oxidase, found in Aliarcobacter butzleri (strain RM4018) (Arcobacter butzleri).